Consider the following 248-residue polypeptide: 1-(5-phosphoribosyl)-5-[(5-phosphoribosylamino)methylideneamino] imidazole-4-carboxamide isomerase (248 aa).

Residue aspartate 7 is the Proton acceptor of the active site. The active-site Proton donor is the aspartate 131.

Belongs to the HisA/HisF family.

It localises to the cytoplasm. It catalyses the reaction 1-(5-phospho-beta-D-ribosyl)-5-[(5-phospho-beta-D-ribosylamino)methylideneamino]imidazole-4-carboxamide = 5-[(5-phospho-1-deoxy-D-ribulos-1-ylimino)methylamino]-1-(5-phospho-beta-D-ribosyl)imidazole-4-carboxamide. It participates in amino-acid biosynthesis; L-histidine biosynthesis; L-histidine from 5-phospho-alpha-D-ribose 1-diphosphate: step 4/9. This Baumannia cicadellinicola subsp. Homalodisca coagulata protein is 1-(5-phosphoribosyl)-5-[(5-phosphoribosylamino)methylideneamino] imidazole-4-carboxamide isomerase.